The sequence spans 1028 residues: Contactin-6 (1028 aa).

A signal peptide spans 1–19; it reads MRLLWKLVILLPLINSCAG. Ig-like C2-type domains follow at residues 32-117, 122-208, 227-308, 318-402, 408-502, and 500-587; these read PQDV…AKLQ, EDFE…RSVQ, PKIE…RNLA, PEWE…AELR, PDFS…RTII, and TIIT…ERLS. 6 cysteine pairs are disulfide-bonded: Cys50/Cys100, Cys144/Cys196, Cys249/Cys297, Cys339/Cys386, Cys431/Cys479, and Cys521/Cys577. Asn65 and Asn193 each carry an N-linked (GlcNAc...) asparagine glycan. Residues Asn368, Asn377, and Asn468 are each glycosylated (N-linked (GlcNAc...) asparagine). Fibronectin type-III domains follow at residues 600-698, 703-800, 805-901, and 902-996; these read PPED…TKAS, APGN…SGED, APRG…TKKS, and PPSQ…KMSS. Residues Asn659, Asn765, Asn860, and Asn865 are each glycosylated (N-linked (GlcNAc...) asparagine). Tyr882 carries the post-translational modification Phosphotyrosine. Residues Asn895, Asn931, Asn956, and Asn957 are each glycosylated (N-linked (GlcNAc...) asparagine). Ser999 is lipidated: GPI-anchor amidated serine. Positions 1000–1028 are cleaved as a propeptide — removed in mature form; that stretch reads TGVQISKPSTQSLSMVGVFYCFAIHPLSR.

The protein belongs to the immunoglobulin superfamily. Contactin family. As to quaternary structure, interacts with PTPRG. Expressed in brain. In brain, it is preferentially expressed in the accessory olfactory bulb, layers II/III and V of the cerebral cortex, piriform cortex, anterior thalamic nuclei, locus coeruleus of the pons and mesencephalic trigeminal nucleus and in Purkinje cells of the cerebellum.

It localises to the cell membrane. Functionally, contactins mediate cell surface interactions during nervous system development. Participates in oligodendrocytes generation by acting as a ligand of NOTCH1. Its association with NOTCH1 promotes NOTCH1 activation through the released notch intracellular domain (NICD) and subsequent translocation to the nucleus. Involved in motor coordination. In Mus musculus (Mouse), this protein is Contactin-6 (Cntn6).